Reading from the N-terminus, the 200-residue chain is MQEKDSKDVTMEDEETIASQEEIEVEGNSEESSKEEESNNSEISDENLSEENLKLKDENEKLKNELDAAKDRLLRLSAEYENYRNRTAKEKEGIYTDACSDVINEMLPTLDNLERAASTEGSAEDIKKGVEMVVKQFKNSLSKLGIEEIPSEGKFDPNLHNAVMHIEDEGYGENEVVEVLQKGYKRGDKVLRHSMVKVAN.

Residues Met1–Thr10 are compositionally biased toward basic and acidic residues. The tract at residues Met1–Asp57 is disordered. A compositionally biased stretch (acidic residues) spans Met11–Ser29.

This sequence belongs to the GrpE family. In terms of assembly, homodimer.

Its subcellular location is the cytoplasm. In terms of biological role, participates actively in the response to hyperosmotic and heat shock by preventing the aggregation of stress-denatured proteins, in association with DnaK and GrpE. It is the nucleotide exchange factor for DnaK and may function as a thermosensor. Unfolded proteins bind initially to DnaJ; upon interaction with the DnaJ-bound protein, DnaK hydrolyzes its bound ATP, resulting in the formation of a stable complex. GrpE releases ADP from DnaK; ATP binding to DnaK triggers the release of the substrate protein, thus completing the reaction cycle. Several rounds of ATP-dependent interactions between DnaJ, DnaK and GrpE are required for fully efficient folding. This Clostridium acetobutylicum (strain ATCC 824 / DSM 792 / JCM 1419 / IAM 19013 / LMG 5710 / NBRC 13948 / NRRL B-527 / VKM B-1787 / 2291 / W) protein is Protein GrpE.